The chain runs to 199 residues: Casparian strip membrane protein 2 (199 aa).

The Cytoplasmic segment spans residues 1 to 37; sequence MMRGSTEIDMPESSSVSKGTAPLIAAPMKEKGGYKKG. The helical transmembrane segment at 38 to 58 threads the bilayer; that stretch reads IAIFDFILRLAAIATALAAAA. At 59 to 87 the chain is on the extracellular side; the sequence is SMGTSDETLPFFTQFFQFQASYDDLPTFQ. The helical transmembrane segment at 88–108 threads the bilayer; that stretch reads FFVIAMAIVAGYLVLSLPFSI. The Cytoplasmic segment spans residues 109 to 120; the sequence is VAIVRPHAAGPR. A helical transmembrane segment spans residues 121-141; it reads LLLIILDTVALTLNTAAGAAA. Residues 142 to 173 lie on the Extracellular side of the membrane; that stretch reads AAIVYLAHNGNSSTNWLAICQQFGDFCQKNSG. Residue Asn-152 is glycosylated (N-linked (GlcNAc...) asparagine). A helical transmembrane segment spans residues 174-194; that stretch reads AVVASFITVVIFVFLLVLSAF. Residues 195 to 199 are Cytoplasmic-facing; it reads ALRRH.

This sequence belongs to the Casparian strip membrane proteins (CASP) family. As to quaternary structure, homodimer and heterodimers.

It localises to the cell membrane. Functionally, regulates membrane-cell wall junctions and localized cell wall deposition. Required for establishment of the Casparian strip membrane domain (CSD) and the subsequent formation of Casparian strips, a cell wall modification of the root endodermis that determines an apoplastic barrier between the intraorganismal apoplasm and the extraorganismal apoplasm and prevents lateral diffusion. The polypeptide is Casparian strip membrane protein 2 (Populus trichocarpa (Western balsam poplar)).